Consider the following 179-residue polypeptide: Replication restart protein DnaT (179 aa).

The segment covering 151–168 has biased composition (polar residues); sequence SRSSNGGMPQRDINSVSE. The segment at 151 to 179 is disordered; that stretch reads SRSSNGGMPQRDINSVSEPDNHIPPGFRG.

This sequence belongs to the DnaT family. Homooligomerizes. Interacts with PriB. Component of the replication restart primosome. Primosome assembly occurs via a 'hand-off' mechanism. PriA binds to replication forks, subsequently PriB then DnaT bind; DnaT then displaces ssDNA to generate the helicase loading substrate.

In terms of biological role, involved in the restart of stalled replication forks, which reloads the replicative helicase on sites other than the origin of replication. Can function in multiple replication restart pathways. Displaces ssDNA from a PriB-ssDNA complex. Probably forms a spiral filament on ssDNA. The sequence is that of Replication restart protein DnaT from Salmonella arizonae (strain ATCC BAA-731 / CDC346-86 / RSK2980).